A 712-amino-acid polypeptide reads, in one-letter code: Cyclolysin secretion/processing ATP-binding protein CyaB (712 aa).

One can recognise a Peptidase C39 domain in the interval 7 to 128 (QCASVPDSGL…ALWAGELLLC (122 aa)). One can recognise an ABC transmembrane type-1 domain in the interval 157-439 (IGEVLLISLV…LAQLWNDFQQ (283 aa)). Transmembrane regions (helical) follow at residues 160 to 180 (VLLI…FFQV), 194 to 214 (LNVI…LTGI), 272 to 292 (AVTV…MFFY), 298 to 318 (LVVL…TPVL), 367 to 387 (VAAG…VTLI), and 390 to 410 (LVAL…RMTV). The ABC transporter domain maps to 471–706 (IELDRVSFRY…GGLYARLQAL (236 aa)). ATP is bound at residue 505–512 (GRSGSGKS).

This sequence belongs to the ABC transporter superfamily. Cyclolysin exporter (TC 3.A.1.109.2) family.

The protein localises to the cell membrane. In terms of biological role, involved in the export of calmodulin-sensitive adenylate cyclase-hemolysin (cyclolysin). This is Cyclolysin secretion/processing ATP-binding protein CyaB (cyaB) from Bordetella pertussis (strain Tohama I / ATCC BAA-589 / NCTC 13251).